A 556-amino-acid chain; its full sequence is Formate--tetrahydrofolate ligase (556 aa).

An ATP-binding site is contributed by 64–71; the sequence is TPAGEGKT.

Belongs to the formate--tetrahydrofolate ligase family.

It catalyses the reaction (6S)-5,6,7,8-tetrahydrofolate + formate + ATP = (6R)-10-formyltetrahydrofolate + ADP + phosphate. It participates in one-carbon metabolism; tetrahydrofolate interconversion. The protein is Formate--tetrahydrofolate ligase of Actinobacillus pleuropneumoniae serotype 5b (strain L20).